Consider the following 937-residue polypeptide: Isoleucine--tRNA ligase (937 aa).

The short motif at 58–68 is the 'HIGH' region element; sequence PYANGDIHIGH. E561 contacts L-isoleucyl-5'-AMP. The short motif at 602–606 is the 'KMSKS' region element; that stretch reads KMSKS. Position 605 (K605) interacts with ATP. Residues C900, C903, C920, and C923 each contribute to the Zn(2+) site.

It belongs to the class-I aminoacyl-tRNA synthetase family. IleS type 1 subfamily. Monomer. It depends on Zn(2+) as a cofactor.

Its subcellular location is the cytoplasm. It catalyses the reaction tRNA(Ile) + L-isoleucine + ATP = L-isoleucyl-tRNA(Ile) + AMP + diphosphate. Its function is as follows. Catalyzes the attachment of isoleucine to tRNA(Ile). As IleRS can inadvertently accommodate and process structurally similar amino acids such as valine, to avoid such errors it has two additional distinct tRNA(Ile)-dependent editing activities. One activity is designated as 'pretransfer' editing and involves the hydrolysis of activated Val-AMP. The other activity is designated 'posttransfer' editing and involves deacylation of mischarged Val-tRNA(Ile). The polypeptide is Isoleucine--tRNA ligase (Alcanivorax borkumensis (strain ATCC 700651 / DSM 11573 / NCIMB 13689 / SK2)).